The following is a 59-amino-acid chain: Large ribosomal subunit protein uL30 (59 aa).

The protein belongs to the universal ribosomal protein uL30 family. In terms of assembly, part of the 50S ribosomal subunit.

In Geobacter metallireducens (strain ATCC 53774 / DSM 7210 / GS-15), this protein is Large ribosomal subunit protein uL30.